Reading from the N-terminus, the 520-residue chain is Protein EARLY FLOWERING 5 (520 aa).

Short sequence motifs (nuclear localization signal) lie at residues 16-23 (YRKQIRKR), 52-59 (IRKLDMSK), and 71-78 (KKRQLEDT). Residues 83-410 (VKKRKEYDEK…PPSSFQDGQA (328 aa)) are disordered. 2 stretches are compositionally biased toward basic and acidic residues: residues 87 to 97 (KEYDEKKKEQG) and 114 to 126 (LTGE…EDSV). Low complexity predominate over residues 148 to 168 (SSIGLAISSDGASSSSAALSS). 3 stretches are compositionally biased toward pro residues: residues 198-207 (PLPPLPPLPP), 216-227 (SPFPPPPPGPPP), and 235-253 (PPLP…PPPG). Polar residues-rich tracts occupy residues 267–281 (SDFT…NITS), 300–312 (AESN…NANL), and 326–343 (QQHQ…TNFQ). 2 stretches are compositionally biased toward pro residues: residues 346 to 369 (VHPP…PPHP) and 378 to 403 (PRPP…PPPS).

In seedlings, mostly expressed in the shoot apical meristem (SAM) and root tip.

It localises to the nucleus. Involved in the regulation of flowering time in both long and short days. The protein is Protein EARLY FLOWERING 5 of Arabidopsis thaliana (Mouse-ear cress).